The following is a 351-amino-acid chain: Histidinol-phosphate aminotransferase (351 aa).

Lys221 is modified (N6-(pyridoxal phosphate)lysine).

It belongs to the class-II pyridoxal-phosphate-dependent aminotransferase family. Histidinol-phosphate aminotransferase subfamily. Homodimer. Pyridoxal 5'-phosphate is required as a cofactor.

The catalysed reaction is L-histidinol phosphate + 2-oxoglutarate = 3-(imidazol-4-yl)-2-oxopropyl phosphate + L-glutamate. The protein operates within amino-acid biosynthesis; L-histidine biosynthesis; L-histidine from 5-phospho-alpha-D-ribose 1-diphosphate: step 7/9. This Staphylococcus saprophyticus subsp. saprophyticus (strain ATCC 15305 / DSM 20229 / NCIMB 8711 / NCTC 7292 / S-41) protein is Histidinol-phosphate aminotransferase.